A 140-amino-acid chain; its full sequence is ATP synthase epsilon chain (140 aa).

This sequence belongs to the ATPase epsilon chain family. As to quaternary structure, F-type ATPases have 2 components, CF(1) - the catalytic core - and CF(0) - the membrane proton channel. CF(1) has five subunits: alpha(3), beta(3), gamma(1), delta(1), epsilon(1). CF(0) has three main subunits: a, b and c.

The protein localises to the cell inner membrane. In terms of biological role, produces ATP from ADP in the presence of a proton gradient across the membrane. This chain is ATP synthase epsilon chain, found in Xanthomonas axonopodis pv. citri (strain 306).